A 209-amino-acid chain; its full sequence is ADP-ribose pyrophosphatase (209 aa).

Substrate-binding positions include 28–29 (FF), 51–52 (RE), arginine 56, and arginine 79. The 139-residue stretch at 55–193 (ERGHAAVLLP…KIDNAASVIA (139 aa)) folds into the Nudix hydrolase domain. Alanine 96 contacts Mg(2+). The Nudix box signature appears at 97–118 (GMIEEGESVEDVARREAIEEAG). Residue methionine 98 coordinates substrate. Mg(2+) is bound by residues glutamate 112 and glutamate 116. Substrate is bound by residues 133 to 135 (SPG) and glutamate 139. Glutamate 162 functions as the Proton acceptor in the catalytic mechanism. Glutamate 164 is a binding site for Mg(2+).

The protein belongs to the Nudix hydrolase family. NudF subfamily. In terms of assembly, homodimer. Requires Mg(2+) as cofactor.

It catalyses the reaction ADP-D-ribose + H2O = D-ribose 5-phosphate + AMP + 2 H(+). Its activity is regulated as follows. Inhibited by phosphorylated compounds such as AMP, ADP, ATP, 3-phosphoglyceric acid and PPi. Not inhibited by orthophosphate. Activity is high in cells grown in low glucose concentrations and decreases dramatically as glucose concentration increases. In terms of biological role, acts on ADP-mannose and ADP-glucose as well as ADP-ribose. Prevents glycogen biosynthesis. The reaction catalyzed by this enzyme is a limiting step of the gluconeogenic process. The sequence is that of ADP-ribose pyrophosphatase (nudF) from Escherichia coli O157:H7.